The following is a 619-amino-acid chain: ATP-dependent zinc metalloprotease FtsH 1 (619 aa).

At 1–8 (MADEKRPA) the chain is on the cytoplasmic side. A helical membrane pass occupies residues 9 to 29 (SRAWLGYLLIAVGILVLSGIV). Over 30–108 (RSRGRPLVPY…RIEAKSPQTS (79 aa)) the chain is Periplasmic. Residues 109-129 (VWMQVAIWMLPLVLINAAFFM) traverse the membrane as a helical segment. At 130 to 619 (MLRRAGQGAG…KIAVGPPSAA (490 aa)) the chain is on the cytoplasmic side. An ATP-binding site is contributed by 203 to 210 (GPPGTGKT). His426 contacts Zn(2+). The active site involves Glu427. Residues His430 and Asp503 each contribute to the Zn(2+) site.

It in the central section; belongs to the AAA ATPase family. The protein in the C-terminal section; belongs to the peptidase M41 family. As to quaternary structure, homohexamer. Requires Zn(2+) as cofactor.

The protein resides in the cell inner membrane. Functionally, acts as a processive, ATP-dependent zinc metallopeptidase for both cytoplasmic and membrane proteins. Plays a role in the quality control of integral membrane proteins. The sequence is that of ATP-dependent zinc metalloprotease FtsH 1 from Sorangium cellulosum (strain So ce56) (Polyangium cellulosum (strain So ce56)).